The chain runs to 442 residues: MPRSLSNEQFSVDLEESPGCIVSALVKVSPEVLNKLNKQALKKIKKEITLPGFRKGKAPDDVIASRYPTNVRKELGELVTQDAYHALSTVGDRRPLSPKAVRSNSITQFDLQEGAKVEFSYEAFPAISDLPWENLSLPQEEAASEISDSDIEKGLTNIGMFFATKTPVERPSQEGDFISISLHVSKSNDENASSAAIFENKYFKLSEEEMTDAFKEKFLGISTGHRVVETITSPEIQSFLRGDTLTFTVNAVIEVSIPEIDDEKARQLQAESLDDLKAKLRIQLEKQAKDKQLQKRFSEAEDALAMLVDFELPTSLLEERISLITREKLLNARLIQYCSDEELEKRKSELIKEAEEDATKALKLLFLTHKIFSDEKLTISREELQYMMDVCSRERFGQQPPKDISNDTLQELVMSARDRLTYSKAIEHVLRKAELLASTPSA.

Positions 175–258 (GDFISISLHV…VNAVIEVSIP (84 aa)) constitute a PPIase FKBP-type domain.

Belongs to the FKBP-type PPIase family. Tig subfamily.

Its subcellular location is the cytoplasm. The catalysed reaction is [protein]-peptidylproline (omega=180) = [protein]-peptidylproline (omega=0). Functionally, involved in protein export. Acts as a chaperone by maintaining the newly synthesized protein in an open conformation. Functions as a peptidyl-prolyl cis-trans isomerase. In Chlamydia pneumoniae (Chlamydophila pneumoniae), this protein is Trigger factor (tig).